The chain runs to 475 residues: Tetratricopeptide repeat protein 29 (475 aa).

TPR repeat units follow at residues 92-131 (DALR…EDAE), 136-173 (FEDV…AQLI), 182-215 (AEAH…TQGR), 234-267 (LRTY…AKEG), 274-307 (GEAS…STEL), 314-347 (GRAY…ARNN), and 354-387 (VRAS…TVEL). Residues 436-475 (DIEPDPVTEEFRGSTVETVSQNSEHLEELSRFPGDQKNET) are disordered. Residues 459–475 (EHLEELSRFPGDQKNET) show a composition bias toward basic and acidic residues.

Its subcellular location is the cytoplasm. The protein resides in the cytoskeleton. It is found in the flagellum axoneme. Its function is as follows. Axonemal protein which is implicated in axonemal and/or peri-axonemal structure assembly and regulates flagellum assembly and beating and therefore sperm motility. The sequence is that of Tetratricopeptide repeat protein 29 (TTC29) from Macaca fascicularis (Crab-eating macaque).